A 304-amino-acid chain; its full sequence is GTPase Era (304 aa).

Residues Tyr-11 to Glu-186 form the Era-type G domain. The interval Gly-19–Ser-26 is G1. A GTP-binding site is contributed by Gly-19 to Ser-26. The interval Gln-45 to His-49 is G2. Residues Asp-66–Gly-69 are G3. GTP-binding positions include Asp-66–Leu-70 and Asn-128–Asp-131. The G4 stretch occupies residues Asn-128 to Asp-131. The tract at residues Ile-158 to Ala-160 is G5. Residues Thr-210–Ser-287 form the KH type-2 domain.

The protein belongs to the TRAFAC class TrmE-Era-EngA-EngB-Septin-like GTPase superfamily. Era GTPase family. Monomer.

The protein resides in the cytoplasm. It is found in the cell inner membrane. Its function is as follows. An essential GTPase that binds both GDP and GTP, with rapid nucleotide exchange. Plays a role in 16S rRNA processing and 30S ribosomal subunit biogenesis and possibly also in cell cycle regulation and energy metabolism. This chain is GTPase Era, found in Histophilus somni (strain 2336) (Haemophilus somnus).